Here is a 334-residue protein sequence, read N- to C-terminus: Trans-3-hydroxy-L-proline dehydratase (334 aa).

Cys-91 (proton acceptor) is an active-site residue. Residues 92 to 93, Asp-250, and 255 to 256 each bind substrate; these read GH and GT.

This sequence belongs to the proline racemase family.

The enzyme catalyses trans-3-hydroxy-L-proline = 1-pyrroline-2-carboxylate + H2O. In terms of biological role, catalyzes the dehydration of trans-3-hydroxy-L-proline (t3LHyp) to Delta(1)-pyrroline-2-carboxylate (Pyr2C). Is likely involved in a degradation pathway that converts t3LHyp to L-proline. Can also catalyze the epimerization of trans-4-hydroxy-L-proline (t4LHyp) to cis-4-hydroxy-D-proline (c4DHyp) in vitro. Displays no proline racemase activity. The protein is Trans-3-hydroxy-L-proline dehydratase of Bacillus thuringiensis subsp. konkukian (strain 97-27).